Reading from the N-terminus, the 70-residue chain is Large ribosomal subunit protein uL29 (70 aa).

This sequence belongs to the universal ribosomal protein uL29 family.

This is Large ribosomal subunit protein uL29 from Symbiobacterium thermophilum (strain DSM 24528 / JCM 14929 / IAM 14863 / T).